A 323-amino-acid polypeptide reads, in one-letter code: Beta-ketoacyl-[acyl-carrier-protein] synthase III (323 aa).

Catalysis depends on residues Cys113 and His250. The ACP-binding stretch occupies residues 251-255; the sequence is QANRR. Asn280 is an active-site residue.

This sequence belongs to the thiolase-like superfamily. FabH family. As to quaternary structure, homodimer.

The protein localises to the cytoplasm. The enzyme catalyses malonyl-[ACP] + acetyl-CoA + H(+) = 3-oxobutanoyl-[ACP] + CO2 + CoA. Its pathway is lipid metabolism; fatty acid biosynthesis. Catalyzes the condensation reaction of fatty acid synthesis by the addition to an acyl acceptor of two carbons from malonyl-ACP. Catalyzes the first condensation reaction which initiates fatty acid synthesis and may therefore play a role in governing the total rate of fatty acid production. Possesses both acetoacetyl-ACP synthase and acetyl transacylase activities. Its substrate specificity determines the biosynthesis of branched-chain and/or straight-chain of fatty acids. This is Beta-ketoacyl-[acyl-carrier-protein] synthase III from Sinorhizobium medicae (strain WSM419) (Ensifer medicae).